Consider the following 107-residue polypeptide: Universal stress protein B homolog (107 aa).

The next 2 membrane-spanning stretches (helical) occupy residues I6–L26 and V86–L106.

It belongs to the universal stress protein B family.

The protein resides in the cell inner membrane. The sequence is that of Universal stress protein B homolog from Vibrio vulnificus (strain CMCP6).